A 226-amino-acid polypeptide reads, in one-letter code: Uracil-DNA glycosylase (226 aa).

Residue aspartate 64 is the Proton acceptor of the active site.

Belongs to the uracil-DNA glycosylase (UDG) superfamily. UNG family.

It is found in the cytoplasm. It catalyses the reaction Hydrolyzes single-stranded DNA or mismatched double-stranded DNA and polynucleotides, releasing free uracil.. Its function is as follows. Excises uracil residues from the DNA which can arise as a result of misincorporation of dUMP residues by DNA polymerase or due to deamination of cytosine. The chain is Uracil-DNA glycosylase from Vibrio vulnificus (strain CMCP6).